The following is a 118-amino-acid chain: Small ribosomal subunit protein uS13 (118 aa).

The tract at residues 92 to 118 is disordered; the sequence is RRGHPLRGQRTRTNARTRKGPRKAIRK.

This sequence belongs to the universal ribosomal protein uS13 family. Part of the 30S ribosomal subunit. Forms a loose heterodimer with protein S19. Forms two bridges to the 50S subunit in the 70S ribosome.

Its function is as follows. Located at the top of the head of the 30S subunit, it contacts several helices of the 16S rRNA. In the 70S ribosome it contacts the 23S rRNA (bridge B1a) and protein L5 of the 50S subunit (bridge B1b), connecting the 2 subunits; these bridges are implicated in subunit movement. Contacts the tRNAs in the A and P-sites. The chain is Small ribosomal subunit protein uS13 from Xanthomonas campestris pv. campestris (strain ATCC 33913 / DSM 3586 / NCPPB 528 / LMG 568 / P 25).